Reading from the N-terminus, the 396-residue chain is L-lactate dehydrogenase (396 aa).

The region spanning 1-380 (MIISAASDYR…TQDSLVQGLG (380 aa)) is the FMN hydroxy acid dehydrogenase domain. Tyr24 lines the substrate pocket. Residues Ser106 and Gln127 each contribute to the FMN site. Residue Tyr129 coordinates substrate. Thr155 contributes to the FMN binding site. Residue Arg164 coordinates substrate. Lys251 lines the FMN pocket. His275 functions as the Proton acceptor in the catalytic mechanism. Arg278 serves as a coordination point for substrate. 306–330 (DSGIRNGLDVVRMIALGADTVLLGR) contacts FMN.

It belongs to the FMN-dependent alpha-hydroxy acid dehydrogenase family. FMN serves as cofactor.

The protein localises to the cell inner membrane. The enzyme catalyses (S)-lactate + A = pyruvate + AH2. Its function is as follows. Catalyzes the conversion of L-lactate to pyruvate. Is coupled to the respiratory chain. In Shigella boydii serotype 4 (strain Sb227), this protein is L-lactate dehydrogenase.